We begin with the raw amino-acid sequence, 254 residues long: Alcohol dehydrogenase 2 (254 aa).

10–33 (FVAGLGGIGLDTSREIVKSGPKNL) is an NAD(+) binding site. Ser-138 contributes to the substrate binding site. Residue Tyr-151 is the Proton acceptor of the active site.

The protein belongs to the short-chain dehydrogenases/reductases (SDR) family. As to quaternary structure, homodimer.

It catalyses the reaction a primary alcohol + NAD(+) = an aldehyde + NADH + H(+). The enzyme catalyses a secondary alcohol + NAD(+) = a ketone + NADH + H(+). This Drosophila montana (Fruit fly) protein is Alcohol dehydrogenase 2 (Adh2).